A 132-amino-acid chain; its full sequence is Small ribosomal subunit protein uS8 (132 aa).

This sequence belongs to the universal ribosomal protein uS8 family. In terms of assembly, part of the 30S ribosomal subunit. Contacts proteins S5 and S12.

Its function is as follows. One of the primary rRNA binding proteins, it binds directly to 16S rRNA central domain where it helps coordinate assembly of the platform of the 30S subunit. In Mycolicibacterium vanbaalenii (strain DSM 7251 / JCM 13017 / BCRC 16820 / KCTC 9966 / NRRL B-24157 / PYR-1) (Mycobacterium vanbaalenii), this protein is Small ribosomal subunit protein uS8.